The primary structure comprises 98 residues: Small ribosomal subunit protein bS20 (98 aa).

This sequence belongs to the bacterial ribosomal protein bS20 family.

Functionally, binds directly to 16S ribosomal RNA. This Synechococcus sp. (strain CC9902) protein is Small ribosomal subunit protein bS20.